Here is a 1384-residue protein sequence, read N- to C-terminus: DNA-directed RNA polymerase subunit beta'' (1384 aa).

Positions 224, 297, 304, and 307 each coordinate Zn(2+).

The protein belongs to the RNA polymerase beta' chain family. RpoC2 subfamily. In terms of assembly, in plastids the minimal PEP RNA polymerase catalytic core is composed of four subunits: alpha, beta, beta', and beta''. When a (nuclear-encoded) sigma factor is associated with the core the holoenzyme is formed, which can initiate transcription. Zn(2+) is required as a cofactor.

Its subcellular location is the plastid. It is found in the chloroplast. It catalyses the reaction RNA(n) + a ribonucleoside 5'-triphosphate = RNA(n+1) + diphosphate. DNA-dependent RNA polymerase catalyzes the transcription of DNA into RNA using the four ribonucleoside triphosphates as substrates. The polypeptide is DNA-directed RNA polymerase subunit beta'' (Sinapis alba (White mustard)).